The following is a 66-amino-acid chain: Large ribosomal subunit protein bL35 (66 aa).

Over residues methionine 1–arginine 26 the composition is skewed to basic residues. Positions methionine 1 to leucine 49 are disordered.

The protein belongs to the bacterial ribosomal protein bL35 family.

In Staphylococcus saprophyticus subsp. saprophyticus (strain ATCC 15305 / DSM 20229 / NCIMB 8711 / NCTC 7292 / S-41), this protein is Large ribosomal subunit protein bL35.